A 662-amino-acid polypeptide reads, in one-letter code: UPF0313 protein CPR_1216 (662 aa).

The Radical SAM core domain occupies 296 to 567; it reads AIEEVKFSLV…AMQRALLQFK (272 aa). C310, C314, and C317 together coordinate [4Fe-4S] cluster. Residues 597 to 662 form a disordered region; the sequence is RDKNSFGKGN…QRVSKGKKRR (66 aa). Residues 618–632 show a composition bias toward basic and acidic residues; it reads SRNENSGRRESEDKK. Over residues 633–644 the composition is skewed to basic residues; that stretch reads RSSHSKKQRGNK.

This sequence belongs to the UPF0313 family. [4Fe-4S] cluster serves as cofactor.

This is UPF0313 protein CPR_1216 from Clostridium perfringens (strain SM101 / Type A).